A 528-amino-acid chain; its full sequence is Glucose transporter 1E (528 aa).

The disordered stretch occupies residues 1-22 (MTERRDNVSHAPDAIEGPNDGA). At 1 to 43 (MTERRDNVSHAPDAIEGPNDGAHAEETSPGFFSFENLGVAQVQ) the chain is on the cytoplasmic side. Residues 44–64 (VVGGTLNGYVIGYVAVYLLLY) form a helical membrane-spanning segment. The Extracellular portion of the chain corresponds to 65 to 118 (LTATECKFTTEGACGGRKIYGCKWSGTTCKFENPKCSEGSDPSDSCKNEVAYTS). Residues 119–139 (VYSGIFACAMIVGSMVGSIIA) form a helical membrane-spanning segment. Over 140–151 (GKCITTFGLKKS) the chain is Cytoplasmic. The chain crosses the membrane as a helical span at residues 152 to 172 (FIIVSITCTIACVVVQVAIEY). Residues 173–175 (NNY) are Extracellular-facing. Residues 176–196 (YALCTGRVLIGLGVGILCSVF) traverse the membrane as a helical segment. Topologically, residues 197 to 213 (PMYVNENAHPKLCKMDG) are cytoplasmic. Residues 214–234 (VLFQVFTTLGIMLAAMLGLIL) traverse the membrane as a helical segment. Residues 235 to 250 (DKTGASKEEANMAGRL) are Extracellular-facing. Residues 251–271 (HVFSAVPLGLSVAMFLVGMFL) traverse the membrane as a helical segment. The Cytoplasmic portion of the chain corresponds to 272-301 (RESTATFAQDDDGKADGGMDPNEYGWGQML). Residues 302–322 (WPLFMGAVTAGTLQLTGINAV) traverse the membrane as a helical segment. Over 323–338 (MNYAPKITENLGMDPS) the chain is Extracellular. Residues 339–359 (LGNFLVMAWNFVTSLVAIPLA) traverse the membrane as a helical segment. At 360–367 (SRFTMRQM) the chain is on the cytoplasmic side. Residues 368–388 (FITCSFVASCMCLFLCGIPVF) traverse the membrane as a helical segment. Residues 389–403 (PGVAEEKVKNGVATT) lie on the Extracellular side of the membrane. A helical membrane pass occupies residues 404-424 (GIALFIAAFEFGVGSCFFVLA). Over 425–438 (QDLFPPSFRPKGSS) the chain is Cytoplasmic. A helical membrane pass occupies residues 439–459 (FVVMMQFIFNILINLLYPITT). Over 460–475 (EAISGGATGDQDKGQA) the chain is Extracellular. The helical transmembrane segment at 476–496 (VVFILFGLIGLICFVLQFFYL) threads the bilayer. The Cytoplasmic segment spans residues 497 to 528 (YPYDANQDHENDHGTEPVERILSPVDVPTPRN). The tract at residues 507–528 (NDHGTEPVERILSPVDVPTPRN) is disordered.

The protein belongs to the major facilitator superfamily. Sugar transporter (TC 2.A.1.1) family.

It is found in the membrane. Its function is as follows. Facilitative glucose transporter. This is Glucose transporter 1E (THT1E) from Trypanosoma brucei brucei.